Here is a 412-residue protein sequence, read N- to C-terminus: NAD-dependent dihydropyrimidine dehydrogenase subunit PreT (412 aa).

Glu-286 contributes to the NAD(+) binding site.

The protein belongs to the NADH dehydrogenase family. Heterotetramer of 2 PreA and 2 PreT subunits.

It catalyses the reaction 5,6-dihydrouracil + NAD(+) = uracil + NADH + H(+). The enzyme catalyses 5,6-dihydrothymine + NAD(+) = thymine + NADH + H(+). Involved in pyrimidine base degradation. Catalyzes physiologically the reduction of uracil to 5,6-dihydrouracil (DHU) by using NADH as a specific cosubstrate. It also catalyzes the reverse reaction and the reduction of thymine to 5,6-dihydrothymine (DHT). This chain is NAD-dependent dihydropyrimidine dehydrogenase subunit PreT (preT), found in Escherichia coli (strain K12).